Reading from the N-terminus, the 108-residue chain is MSDTEYLARAEAVLAAVERTVDVANDGDHDIDLERNGSVLTLTFENGSKIIVNLQPPMKEVWIAAKAGGFHYRFIDGEWRDTRTGTEFFSALTEYATQQAGLPITFSA.

Belongs to the frataxin family.

Its function is as follows. Involved in iron-sulfur (Fe-S) cluster assembly. May act as a regulator of Fe-S biogenesis. The chain is Iron-sulfur cluster assembly protein CyaY from Burkholderia orbicola (strain MC0-3).